Reading from the N-terminus, the 265-residue chain is HUWE1-associated protein modifying stress responses (265 aa).

Disordered stretches follow at residues 1-22, 145-170, 195-218, and 240-265; these read MEDKKEEGESEIQEHGPEHWFS, RNSRAPPRLTVVSPNRATPTETGSSV, VRSSTPGSPTHVSGSSNTGRRRNG, and GTRKRSSAQCGDVITDSPTHKRNRMI. 2 stretches are compositionally biased toward polar residues: residues 156 to 170 and 195 to 212; these read VSPNRATPTETGSSV and VRSSTPGSPTHVSGSSNT.

Belongs to the TAPR1 family. As to quaternary structure, oligomer.

Its subcellular location is the nucleus. It localises to the cytoplasm. Its function is as follows. Acts as a central player within a network of stress response pathways promoting cellular adaptability. Functions as a negative regulator of TP53/P53 in the cellular response to telomere erosion and probably also DNA damage. This Xenopus laevis (African clawed frog) protein is HUWE1-associated protein modifying stress responses.